We begin with the raw amino-acid sequence, 441 residues long: D-aminoacyl-tRNA deacylase (441 aa).

The protein belongs to the DtdA deacylase family. Monomer. Requires Zn(2+) as cofactor.

The enzyme catalyses a D-aminoacyl-tRNA + H2O = a tRNA + a D-alpha-amino acid + H(+). It carries out the reaction glycyl-tRNA(Ala) + H2O = tRNA(Ala) + glycine + H(+). Functionally, D-aminoacyl-tRNA deacylase with broad substrate specificity. By recycling D-aminoacyl-tRNA to D-amino acids and free tRNA molecules, this enzyme counteracts the toxicity associated with the formation of D-aminoacyl-tRNA entities in vivo. This is D-aminoacyl-tRNA deacylase from Natronomonas pharaonis (strain ATCC 35678 / DSM 2160 / CIP 103997 / JCM 8858 / NBRC 14720 / NCIMB 2260 / Gabara) (Halobacterium pharaonis).